The chain runs to 447 residues: UPF0210 protein LEUM_1180 (447 aa).

It belongs to the UPF0210 family. Homodimer.

The sequence is that of UPF0210 protein LEUM_1180 from Leuconostoc mesenteroides subsp. mesenteroides (strain ATCC 8293 / DSM 20343 / BCRC 11652 / CCM 1803 / JCM 6124 / NCDO 523 / NBRC 100496 / NCIMB 8023 / NCTC 12954 / NRRL B-1118 / 37Y).